The sequence spans 252 residues: uncharacterized protein (252 aa).

This sequence belongs to the methyltransferase superfamily.

This is an uncharacterized protein from Mycobacterium sp. (strain KMS).